We begin with the raw amino-acid sequence, 393 residues long: NAD(P)H-quinone oxidoreductase subunit H, chloroplastic (393 aa).

This sequence belongs to the complex I 49 kDa subunit family. In terms of assembly, NDH is composed of at least 16 different subunits, 5 of which are encoded in the nucleus.

The protein resides in the plastid. It is found in the chloroplast thylakoid membrane. It carries out the reaction a plastoquinone + NADH + (n+1) H(+)(in) = a plastoquinol + NAD(+) + n H(+)(out). The catalysed reaction is a plastoquinone + NADPH + (n+1) H(+)(in) = a plastoquinol + NADP(+) + n H(+)(out). NDH shuttles electrons from NAD(P)H:plastoquinone, via FMN and iron-sulfur (Fe-S) centers, to quinones in the photosynthetic chain and possibly in a chloroplast respiratory chain. The immediate electron acceptor for the enzyme in this species is believed to be plastoquinone. Couples the redox reaction to proton translocation, and thus conserves the redox energy in a proton gradient. The protein is NAD(P)H-quinone oxidoreductase subunit H, chloroplastic of Ipomoea purpurea (Common morning glory).